We begin with the raw amino-acid sequence, 236 residues long: DCN1-like protein 5 (236 aa).

Serine 9, serine 40, and serine 47 each carry phosphoserine. Residues 45-231 form the DCUN1 domain; the sequence is FSSKKCLAWF…LLDEFVEWHK (187 aa).

Part of a complex that contains DCUN1D5, CUL1 and RBX1; this interaction is bridged by CUL1. Interacts (via the DCUN1 domain) with the unneddylated cullins: interacts with CUL1, CUL2, CUL3, CUL4A, CUL4B and CUL5; these interactions promote the cullin neddylation and the identity of the cullin dictates the affinity of the interaction. Interacts (via DCUN1 domain) with UBE2M (N-terminally acetylated form) and probably with UBE2F (N-terminally acetylated form). May also interact with regulators or subunits of cullin-RING ligases such as RBX1, RNF7, ELOB and DDB1; these interactions are bridged by cullins. Interacts with CAND1; this interaction is bridged by cullins and strongly inhibits the neddylation of cullins. These CAND-cullin-DCNL complexes can only be neddylated in the presence of a substrate adapter. In terms of processing, phosphorylation at Ser-40 is independent of cullin's interaction. Phosphorylated in response to both TICAM1 and MYD88 dependent Toll-like receptor (TLR) pathway activation. Phosphorylated in response to IL1B stimulation.

The protein resides in the nucleus. It localises to the cytoplasm. Its subcellular location is the cytoskeleton. The protein localises to the spindle. In terms of biological role, contributes to the neddylation of all cullins by transferring NEDD8 from N-terminally acetylated NEDD8-conjugating E2s enzyme to different cullin C-terminal domain-RBX complexes which is necessary for the activation of cullin-RING E3 ubiquitin ligases (CRLs). May play a role in DNA damage response and may participate in cell proliferation and anchorage-independent cell growth. This Bos taurus (Bovine) protein is DCN1-like protein 5 (DCUN1D5).